The sequence spans 475 residues: tRNA-2-methylthio-N(6)-dimethylallyladenosine synthase (475 aa).

The 118-residue stretch at 2–119 folds into the MTTase N-terminal domain; sequence AKLHITTWGC…LPEMINKIRG (118 aa). The [4Fe-4S] cluster site is built by Cys11, Cys48, Cys82, Cys156, Cys160, and Cys163. Residues 142-374 enclose the Radical SAM core domain; sequence RAEGPTAFVS…QQRINHQAMQ (233 aa). Residues 377 to 440 enclose the TRAM domain; sequence RAMLGTEQRV…TNSLRGDVVR (64 aa).

This sequence belongs to the methylthiotransferase family. MiaB subfamily. Monomer. [4Fe-4S] cluster serves as cofactor.

It is found in the cytoplasm. The catalysed reaction is N(6)-dimethylallyladenosine(37) in tRNA + (sulfur carrier)-SH + AH2 + 2 S-adenosyl-L-methionine = 2-methylsulfanyl-N(6)-dimethylallyladenosine(37) in tRNA + (sulfur carrier)-H + 5'-deoxyadenosine + L-methionine + A + S-adenosyl-L-homocysteine + 2 H(+). Functionally, catalyzes the methylthiolation of N6-(dimethylallyl)adenosine (i(6)A), leading to the formation of 2-methylthio-N6-(dimethylallyl)adenosine (ms(2)i(6)A) at position 37 in tRNAs that read codons beginning with uridine. The protein is tRNA-2-methylthio-N(6)-dimethylallyladenosine synthase of Actinobacillus pleuropneumoniae serotype 5b (strain L20).